A 506-amino-acid polypeptide reads, in one-letter code: Glutamate--tRNA ligase (506 aa).

Residues 29–39 carry the 'HIGH' region motif; sequence PSPTGTPHVGL. The 'KMSKS' region motif lies at 273–277; sequence KLSKR. Lysine 276 contributes to the ATP binding site.

It belongs to the class-I aminoacyl-tRNA synthetase family. Glutamate--tRNA ligase type 1 subfamily. In terms of assembly, monomer.

The protein resides in the cytoplasm. It catalyses the reaction tRNA(Glu) + L-glutamate + ATP = L-glutamyl-tRNA(Glu) + AMP + diphosphate. Catalyzes the attachment of glutamate to tRNA(Glu) in a two-step reaction: glutamate is first activated by ATP to form Glu-AMP and then transferred to the acceptor end of tRNA(Glu). This is Glutamate--tRNA ligase from Paenarthrobacter aurescens (strain TC1).